A 236-amino-acid chain; its full sequence is MIEFGKRATPQSAADAVRGDSGMASGMSAGAMATLAQSAASTHAYYDTTFSRRAMKVLPGEYSVTTEDLMLVTVLGSCVSACVRDKTLGIGGMNHFMLPSRNEGESILSPSMRYGTHAMEVLLNQLYKAGAKRERLEIKVFGGAAVLAGMSTLDVGERNGKFVLEFLRNEGLTVAAKDLFDVHPRKVYFVPSTGQIMVRKLRSQNSAAELDSEAQYASKLSKSITTKPASRLQLFT.

The interval 1–20 is disordered; the sequence is MIEFGKRATPQSAADAVRGD.

This sequence belongs to the CheD family.

It carries out the reaction L-glutaminyl-[protein] + H2O = L-glutamyl-[protein] + NH4(+). Probably deamidates glutamine residues to glutamate on methyl-accepting chemotaxis receptors (MCPs), playing an important role in chemotaxis. The protein is Probable chemoreceptor glutamine deamidase CheD of Ralstonia pickettii (strain 12J).